We begin with the raw amino-acid sequence, 98 residues long: Integration host factor subunit alpha (98 aa).

Residues 52 to 73 (FDLRQKSERPGRNPKTGEDIPI) form a disordered region. The span at 54 to 73 (LRQKSERPGRNPKTGEDIPI) shows a compositional bias: basic and acidic residues.

Belongs to the bacterial histone-like protein family. Heterodimer of an alpha and a beta chain.

This protein is one of the two subunits of integration host factor, a specific DNA-binding protein that functions in genetic recombination as well as in transcriptional and translational control. The polypeptide is Integration host factor subunit alpha (Pseudoalteromonas atlantica (strain T6c / ATCC BAA-1087)).